The sequence spans 281 residues: MPLSALESTINAAFDARDTVSAATKGEVRDAVEQALDLLDKGEVRVAAREASGAWVVNQWLKKAVLLSFRLNDMTTISGGPGGASWWDKVPSKFYGWGENRFRDAGFRAVPGAIVRRSAFIGKNVVLMPSFVNLGAYVDEATMVDTWSTVGSCAQIGKRVHISGGVGIGGVLEPLQAGPVIIEDDCFIGARAEVAEGVIVRRGAVLAMGVFLGASTKIVDRTTGEIFIGEVPEYSVVVPGALPGKPMANGEPGPATACAVIVKRVDERTRSKTSINELLRD.

Substrate is bound by residues Arg108 and Asp145.

It belongs to the transferase hexapeptide repeat family. As to quaternary structure, homotrimer.

The protein localises to the cytoplasm. The catalysed reaction is (S)-2,3,4,5-tetrahydrodipicolinate + succinyl-CoA + H2O = (S)-2-succinylamino-6-oxoheptanedioate + CoA. It participates in amino-acid biosynthesis; L-lysine biosynthesis via DAP pathway; LL-2,6-diaminopimelate from (S)-tetrahydrodipicolinate (succinylase route): step 1/3. The sequence is that of 2,3,4,5-tetrahydropyridine-2,6-dicarboxylate N-succinyltransferase from Rhodopseudomonas palustris (strain BisA53).